Here is a 386-residue protein sequence, read N- to C-terminus: ATP phosphoribosyltransferase regulatory subunit (386 aa).

The protein belongs to the class-II aminoacyl-tRNA synthetase family. HisZ subfamily. In terms of assembly, heteromultimer composed of HisG and HisZ subunits.

The protein localises to the cytoplasm. It participates in amino-acid biosynthesis; L-histidine biosynthesis; L-histidine from 5-phospho-alpha-D-ribose 1-diphosphate: step 1/9. Required for the first step of histidine biosynthesis. May allow the feedback regulation of ATP phosphoribosyltransferase activity by histidine. This chain is ATP phosphoribosyltransferase regulatory subunit, found in Variovorax paradoxus (strain S110).